We begin with the raw amino-acid sequence, 224 residues long: GrpE protein homolog 2, mitochondrial (224 aa).

A mitochondrion-targeting transit peptide spans 1-31; that stretch reads MAARSLWAVQRLQRLLASGAMSESRGWLHPF. An N6-acetyllysine modification is found at lysine 141.

Belongs to the GrpE family. In terms of assembly, probable component of the PAM complex at least composed of a mitochondrial HSP70 protein, GRPEL1 or GRPEL2, TIMM44, TIMM16/PAM16 and TIMM14/DNAJC19. In terms of tissue distribution, ubiquitous.

The protein resides in the mitochondrion matrix. Its function is as follows. Essential component of the PAM complex, a complex required for the translocation of transit peptide-containing proteins from the inner membrane into the mitochondrial matrix in an ATP-dependent manner. Seems to control the nucleotide-dependent binding of mitochondrial HSP70 to substrate proteins. Stimulates ATPase activity of mt-HSP70. May also serve to modulate the interconversion of oligomeric (inactive) and monomeric (active) forms of mt-HSP70. This is GrpE protein homolog 2, mitochondrial (Grpel2) from Mus musculus (Mouse).